The primary structure comprises 489 residues: Mitochondrial-processing peptidase subunit beta (489 aa).

A mitochondrion-targeting transit peptide spans 1-43 (MAAAAARVVLSSAARRRLWGFSESLLIRGAAGRSLYFGENRLR). Position 101 (His-101) interacts with Zn(2+). Glu-104 acts as the Proton acceptor in catalysis. Positions 105 and 181 each coordinate Zn(2+).

This sequence belongs to the peptidase M16 family. In terms of assembly, heterodimer of PMPCA (alpha) and PMPCB (beta) subunits, forming the mitochondrial processing protease (MPP) in which PMPCA is involved in substrate recognition and binding and PMPCB is the catalytic subunit. Zn(2+) serves as cofactor.

The protein resides in the mitochondrion matrix. The catalysed reaction is Release of N-terminal transit peptides from precursor proteins imported into the mitochondrion, typically with Arg in position P2.. Binding to PMPCA is required for catalytic activity. Functionally, catalytic subunit of the essential mitochondrial processing protease (MPP), which cleaves the mitochondrial sequence off newly imported precursors proteins. Preferentially, cleaves after an arginine at position P2. Required for PINK1 turnover by coupling PINK1 mitochondrial import and cleavage, which results in subsequent PINK1 proteolysis. The polypeptide is Mitochondrial-processing peptidase subunit beta (PMPCB) (Homo sapiens (Human)).